Reading from the N-terminus, the 429-residue chain is Adenylosuccinate synthetase (429 aa).

GTP is bound by residues 13 to 19 and 41 to 43; these read GDEGKGK and GHT. D14 acts as the Proton acceptor in catalysis. Mg(2+)-binding residues include D14 and G41. IMP is bound by residues 14 to 17, 39 to 42, T130, R144, Q225, T240, and R304; these read DEGK and NAGH. Catalysis depends on H42, which acts as the Proton donor. Residue 300–306 coordinates substrate; that stretch reads ATTGRRR. GTP-binding positions include R306, 332-334, and 417-419; these read KLD and STG.

The protein belongs to the adenylosuccinate synthetase family. In terms of assembly, homodimer. Requires Mg(2+) as cofactor.

It localises to the cytoplasm. The catalysed reaction is IMP + L-aspartate + GTP = N(6)-(1,2-dicarboxyethyl)-AMP + GDP + phosphate + 2 H(+). It functions in the pathway purine metabolism; AMP biosynthesis via de novo pathway; AMP from IMP: step 1/2. Functionally, plays an important role in the de novo pathway of purine nucleotide biosynthesis. Catalyzes the first committed step in the biosynthesis of AMP from IMP. This Buchnera aphidicola subsp. Baizongia pistaciae (strain Bp) protein is Adenylosuccinate synthetase.